A 323-amino-acid polypeptide reads, in one-letter code: Tumor-associated calcium signal transducer 2 (323 aa).

The signal sequence occupies residues 1–26 (MARGPGLAPPPLRLPLLLLVLAAVTG). At 27–274 (HTAAQDNCTC…PPKFSMKRLT (248 aa)) the chain is on the extracellular side. N33 is a glycosylation site (N-linked (GlcNAc...) asparagine). One can recognise a Thyroglobulin type-1 domain in the interval 70-145 (TSKCLLLKAR…TDKGDLSLRC (76 aa)). 3 disulfide bridges follow: C73/C108, C119/C125, and C127/C145. Residue N120 is glycosylated (N-linked (GlcNAc...) asparagine). Residues N168 and N208 are each glycosylated (N-linked (GlcNAc...) asparagine). Residues 275–297 (AGLIAVIVVVVVALVAGMAVLVI) form a helical membrane-spanning segment. Residues 298–323 (TNRRKSGKYKKVEIKELGELRKEPSL) lie on the Cytoplasmic side of the membrane.

The protein belongs to the EPCAM family. The N-terminus is blocked. As to expression, placenta, pancreatic carcinoma cell lines.

It is found in the membrane. May function as a growth factor receptor. The protein is Tumor-associated calcium signal transducer 2 (TACSTD2) of Homo sapiens (Human).